A 117-amino-acid polypeptide reads, in one-letter code: cAMP-regulated phosphoprotein 19-A (117 aa).

The segment covering M1–L37 has biased composition (basic and acidic residues). Residues M1–L54 are disordered. S28 carries the post-translational modification Phosphoserine; by CDK2. S67 bears the Phosphoserine; by GWL mark. Positions K78–G117 are disordered. Residue T99 is modified to Phosphothreonine; by CDK2. S109 carries the post-translational modification Phosphoserine; by PKA.

The protein belongs to the endosulfine family. In terms of assembly, interacts (when phosphorylated at Ser-67) with ppp2r2d. Phosphorylation at Ser-67 by gwl during mitosis is essential for interaction with ppp2r2d (PR55-delta) and subsequent inactivation of PP2A. Phosphorylated by PKA.

The protein localises to the cytoplasm. Its function is as follows. Protein phosphatase inhibitor that specifically inhibits protein phosphatase 2A (PP2A) during mitosis. When phosphorylated at Ser-67 during mitosis, specifically interacts with ppp2r2d (PR55-delta) and inhibits its activity, leading to inactivation of PP2A, an essential condition to keep cyclin-B1-CDK1 activity high during M phase. This Xenopus laevis (African clawed frog) protein is cAMP-regulated phosphoprotein 19-A (arpp19-a).